We begin with the raw amino-acid sequence, 299 residues long: Regucalcin (299 aa).

Glu-18 provides a ligand contact to a divalent metal cation. Residues Arg-101, Asn-103, and Glu-121 each contribute to the substrate site. A divalent metal cation is bound by residues Asn-154 and Asp-204. The Proton donor/acceptor role is filled by Asp-204.

The protein belongs to the SMP-30/CGR1 family. It depends on Zn(2+) as a cofactor. The cofactor is Mn(2+). Ca(2+) serves as cofactor. Requires Mg(2+) as cofactor.

It localises to the cytoplasm. The enzyme catalyses D-glucono-1,5-lactone + H2O = D-gluconate + H(+). It functions in the pathway cofactor biosynthesis; L-ascorbate biosynthesis via UDP-alpha-D-glucuronate pathway; L-ascorbate from UDP-alpha-D-glucuronate: step 3/4. Gluconolactonase with low activity towards other sugar lactones, including gulonolactone and galactonolactone. Catalyzes a key step in ascorbic acid (vitamin C) biosynthesis. Can also hydrolyze diisopropyl phosphorofluoridate and phenylacetate (in vitro). Calcium-binding protein. Modulates Ca(2+) signaling, and Ca(2+)-dependent cellular processes and enzyme activities. The protein is Regucalcin of Gallus gallus (Chicken).